Reading from the N-terminus, the 807-residue chain is Carbamoyltransferase HypF2 (807 aa).

Positions 14-101 constitute an Acylphosphatase-like domain; sequence RIRIRVRGVV…VDADGFAILE (88 aa). C4-type zinc fingers lie at residues 120 to 145 and 170 to 195; these read CPDC…CTQC and CRPC…CPDC. Residues 212-415 enclose the YrdC-like domain; sequence VDPIAETVAR…HVQFIRRARG (204 aa). The disordered stretch occupies residues 663 to 682; the sequence is WGEQPSPGRPKTVAHSLGGV.

It belongs to the carbamoyltransferase HypF family.

It catalyses the reaction C-terminal L-cysteinyl-[HypE protein] + carbamoyl phosphate + ATP + H2O = C-terminal S-carboxamide-L-cysteinyl-[HypE protein] + AMP + phosphate + diphosphate + H(+). It participates in protein modification; [NiFe] hydrogenase maturation. Its function is as follows. Involved in the maturation of [NiFe] hydrogenases. Along with HypE, it catalyzes the synthesis of the CN ligands of the active site iron of [NiFe]-hydrogenases. HypF functions as a carbamoyl transferase using carbamoylphosphate as a substrate and transferring the carboxamido moiety in an ATP-dependent reaction to the thiolate of the C-terminal cysteine of HypE yielding a protein-S-carboxamide. This chain is Carbamoyltransferase HypF2 (hypF2), found in Cupriavidus necator (strain ATCC 17699 / DSM 428 / KCTC 22496 / NCIMB 10442 / H16 / Stanier 337) (Ralstonia eutropha).